A 182-amino-acid polypeptide reads, in one-letter code: ATP-dependent protease subunit HslV (182 aa).

Thr-10 is a catalytic residue. Na(+) is bound by residues Ala-166, Cys-169, and Ser-172.

It belongs to the peptidase T1B family. HslV subfamily. In terms of assembly, a double ring-shaped homohexamer of HslV is capped on each side by a ring-shaped HslU homohexamer. The assembly of the HslU/HslV complex is dependent on binding of ATP.

The protein localises to the cytoplasm. The enzyme catalyses ATP-dependent cleavage of peptide bonds with broad specificity.. With respect to regulation, allosterically activated by HslU binding. Its function is as follows. Protease subunit of a proteasome-like degradation complex believed to be a general protein degrading machinery. This chain is ATP-dependent protease subunit HslV, found in Rickettsia typhi (strain ATCC VR-144 / Wilmington).